Here is a 256-residue protein sequence, read N- to C-terminus: Acetyl-coenzyme A carboxylase carboxyl transferase subunit alpha (256 aa).

One can recognise a CoA carboxyltransferase C-terminal domain in the interval 1–236 (MTDVSRVLKE…KANLIEQITS (236 aa)).

This sequence belongs to the AccA family. Acetyl-CoA carboxylase is a heterohexamer composed of biotin carboxyl carrier protein (AccB), biotin carboxylase (AccC) and two subunits each of ACCase subunit alpha (AccA) and ACCase subunit beta (AccD).

It is found in the cytoplasm. It carries out the reaction N(6)-carboxybiotinyl-L-lysyl-[protein] + acetyl-CoA = N(6)-biotinyl-L-lysyl-[protein] + malonyl-CoA. Its pathway is lipid metabolism; malonyl-CoA biosynthesis; malonyl-CoA from acetyl-CoA: step 1/1. In terms of biological role, component of the acetyl coenzyme A carboxylase (ACC) complex. First, biotin carboxylase catalyzes the carboxylation of biotin on its carrier protein (BCCP) and then the CO(2) group is transferred by the carboxyltransferase to acetyl-CoA to form malonyl-CoA. The protein is Acetyl-coenzyme A carboxylase carboxyl transferase subunit alpha of Streptococcus pyogenes serotype M2 (strain MGAS10270).